The sequence spans 131 residues: uncharacterized protein (131 aa).

This is an uncharacterized protein from Schizosaccharomyces pombe (strain 972 / ATCC 24843) (Fission yeast).